Reading from the N-terminus, the 424-residue chain is Tyrosine--tRNA ligase 1 (424 aa).

L-tyrosine is bound at residue tyrosine 37. The short motif at 42–51 is the 'HIGH' region element; that stretch reads PTADSLHLGH. L-tyrosine-binding residues include tyrosine 175 and glutamine 179. Positions 235–239 match the 'KMSKS' region motif; the sequence is KFGKT. Position 238 (lysine 238) interacts with ATP. The S4 RNA-binding domain maps to 357-414; the sequence is ADLQQALVNAGLVPSRGQARTMISSNAVAINGEKQSEPEYLFTDSNRLFDRYTLLRRG.

It belongs to the class-I aminoacyl-tRNA synthetase family. TyrS type 1 subfamily. As to quaternary structure, homodimer.

It localises to the cytoplasm. It carries out the reaction tRNA(Tyr) + L-tyrosine + ATP = L-tyrosyl-tRNA(Tyr) + AMP + diphosphate + H(+). Catalyzes the attachment of tyrosine to tRNA(Tyr) in a two-step reaction: tyrosine is first activated by ATP to form Tyr-AMP and then transferred to the acceptor end of tRNA(Tyr). This chain is Tyrosine--tRNA ligase 1, found in Photorhabdus laumondii subsp. laumondii (strain DSM 15139 / CIP 105565 / TT01) (Photorhabdus luminescens subsp. laumondii).